Reading from the N-terminus, the 150-residue chain is D-aminoacyl-tRNA deacylase (150 aa).

The Gly-cisPro motif, important for rejection of L-amino acids signature appears at 140–141; that stretch reads GP.

The protein belongs to the DTD family. Homodimer.

The protein localises to the cytoplasm. The enzyme catalyses glycyl-tRNA(Ala) + H2O = tRNA(Ala) + glycine + H(+). It catalyses the reaction a D-aminoacyl-tRNA + H2O = a tRNA + a D-alpha-amino acid + H(+). It carries out the reaction D-tyrosyl-tRNA(Tyr) + H2O = D-tyrosine + tRNA(Tyr). In terms of biological role, an aminoacyl-tRNA editing enzyme that deacylates mischarged D-aminoacyl-tRNAs. Hydrolyzes D-tyrosyl-tRNA(Tyr) into D-tyrosine and free tRNA(Tyr). May also deacylate mischarged D-leucyl-tRNA(Leu). Also deacylates mischarged glycyl-tRNA(Ala), protecting cells against glycine mischarging by AlaRS. Acts via tRNA-based rather than protein-based catalysis; rejects L-amino acids rather than detecting D-amino acids in the active site. By recycling D-aminoacyl-tRNA to D-amino acids and free tRNA molecules, this enzyme counteracts the toxicity associated with the formation of D-aminoacyl-tRNA entities in vivo and helps enforce protein L-homochirality. The sequence is that of D-aminoacyl-tRNA deacylase from Saccharomyces cerevisiae (strain ATCC 204508 / S288c) (Baker's yeast).